Here is a 506-residue protein sequence, read N- to C-terminus: Tripartite terminase subunit 3 (506 aa).

Glu-128 functions as the For ATPase activity in the catalytic mechanism. Active-site for nuclease activity residues include Asp-282, Glu-354, and Asp-475.

It belongs to the herpesviridae TRM3 protein family. As to quaternary structure, interacts with the terminase subunits TRM1 and TRM2. Interacts with portal protein.

The protein localises to the host nucleus. Its function is as follows. Component of the molecular motor that translocates viral genomic DNA in empty capsid during DNA packaging. Forms a tripartite terminase complex together with TRM1 and TRM2 in the host cytoplasm. Once the complex reaches the host nucleus, it interacts with the capsid portal vertex. This portal forms a ring in which genomic DNA is translocated into the capsid. TRM3 carries an RNase H-like nuclease activity that plays an important role for the cleavage of concatemeric viral DNA into unit length genomes. The chain is Tripartite terminase subunit 3 from Amazona oratrix (yellow-headed parrot).